Consider the following 681-residue polypeptide: Translation factor GUF1 homolog, chloroplastic (681 aa).

The transit peptide at 1 to 51 (MAMASAMDLSSPPTFFLSGTSTSSPSLRRLSSISVSGFRRHSNRKLQILCQ) directs the protein to the chloroplast. The tr-type G domain occupies 84 to 265 (SNIRNFSIIA…AIVQRIPAPL (182 aa)). Residues 93–100 (AHIDHGKS), 158–162 (DTPGH), and 212–215 (NKID) each bind GTP.

The protein belongs to the TRAFAC class translation factor GTPase superfamily. Classic translation factor GTPase family. LepA subfamily.

Its subcellular location is the plastid. The protein resides in the chloroplast. The enzyme catalyses GTP + H2O = GDP + phosphate + H(+). In terms of biological role, promotes chloroplast protein synthesis. May act as a fidelity factor of the translation reaction, by catalyzing a one-codon backward translocation of tRNAs on improperly translocated ribosomes. This is Translation factor GUF1 homolog, chloroplastic from Arabidopsis thaliana (Mouse-ear cress).